We begin with the raw amino-acid sequence, 201 residues long: MSTIVDMVDVSLVDKCCWICKESCDVVRNYCKCRGDNKIVHKECLEEWINTDTVKNKSCAICETPYNVKQQYKKLTKWRCYRRDCHDSLLVNLPLCLIVGGISTYTLVSVEIIKLMESEETSELTKVFLVTSFLGPFIVTVLSALRTCIDCRTYFLTTRKRNTIHTLQELEDDDDDDDDDDDDDDEEYADAVEEIIIGPSN.

The Cytoplasmic segment spans residues 1-92; sequence MSTIVDMVDV…RDCHDSLLVN (92 aa). An RING-CH-type zinc finger spans residues 9 to 69; that stretch reads DVSLVDKCCW…AICETPYNVK (61 aa). Zn(2+) is bound by residues Cys-17, Cys-20, Cys-31, Cys-33, His-41, Cys-44, Cys-59, and Cys-62. The chain crosses the membrane as a helical span at residues 93-113; that stretch reads LPLCLIVGGISTYTLVSVEII. Over 114 to 123 the chain is Lumenal; sequence KLMESEETSE. The helical transmembrane segment at 124-144 threads the bilayer; the sequence is LTKVFLVTSFLGPFIVTVLSA. Topologically, residues 145-201 are cytoplasmic; that stretch reads LRTCIDCRTYFLTTRKRNTIHTLQELEDDDDDDDDDDDDDDEEYADAVEEIIIGPSN. The interval 168–188 is disordered; it reads QELEDDDDDDDDDDDDDDEEY. Over residues 169–188 the composition is skewed to acidic residues; sequence ELEDDDDDDDDDDDDDDEEY.

Belongs to the poxviridae LAP protein family.

Its subcellular location is the host membrane. It is found in the host Golgi apparatus. It localises to the host trans-Golgi network membrane. The protein localises to the host early endosome membrane. The enzyme catalyses S-ubiquitinyl-[E2 ubiquitin-conjugating enzyme]-L-cysteine + [acceptor protein]-L-lysine = [E2 ubiquitin-conjugating enzyme]-L-cysteine + N(6)-ubiquitinyl-[acceptor protein]-L-lysine.. Its function is as follows. E3 ubiquitin-protein ligase which promotes ubiquitination and subsequent degradation of host MHC-I and CD4 molecules, presumably to prevent lysis of infected cells by cytotoxic T-lymphocytes and NK cell. Binds target molecules through transmembrane interaction. The result of this ubiquitination is the enhancement of the endocytosis of the target chain and the delivery to the lysosome, where it is proteolytically destroyed. The polypeptide is E3 ubiquitin-protein ligase LAP (Oryctolagus cuniculus (Rabbit)).